A 238-amino-acid chain; its full sequence is MAAANAPFALVSRLSPAARLPIRAWRAARPAPLSTGGRTRPLSVASAAQENRDNSVDVQVSQAQNAGNQQGNAVQRRPRRAGFDISPFGLVDPMSPMRTMRQMLDTMDRLFDDAVGFPTRRSPAARARRRMPWDIMEDEKEVKMRFDMPGLSREEVRVMVEDDALVIRGEHKKEAGEGQGEGGDGWWKERSVSSYDMRLALPDECDKSQVRAELKNGVLLVSVPKRETERKVIDVQVQ.

Positions A31–P87 are disordered. Positions V58 to Q75 are enriched in low complexity. The region spanning A124–Q238 is the sHSP domain.

This sequence belongs to the small heat shock protein (HSP20) family.

The protein resides in the plastid. The protein localises to the chloroplast. In Triticum aestivum (Wheat), this protein is Small heat shock protein, chloroplastic (HSP21).